The primary structure comprises 290 residues: Isopentenyl-diphosphate Delta-isomerase II (290 aa).

Residues 108-260 (MLHRAFTVFL…GLKLSPWFRL (153 aa)) form the Nudix hydrolase domain. Residues C145 and E207 contribute to the active site.

It belongs to the IPP isomerase type 1 family.

It catalyses the reaction isopentenyl diphosphate = dimethylallyl diphosphate. Its pathway is isoprenoid biosynthesis; dimethylallyl diphosphate biosynthesis; dimethylallyl diphosphate from isopentenyl diphosphate: step 1/1. It participates in porphyrin-containing compound metabolism; chlorophyll biosynthesis. In terms of biological role, catalyzes the 1,3-allylic rearrangement of the homoallylic substrate isopentenyl (IPP) to its highly electrophilic allylic isomer, dimethylallyl diphosphate (DMAPP). In Clarkia xantiana (Gunsight clarkia), this protein is Isopentenyl-diphosphate Delta-isomerase II (IPI2).